Consider the following 199-residue polypeptide: Cytochrome c oxidase subunit 2 (199 aa).

Residues 1–13 (AICSLVLYLLTLM) traverse the membrane as a helical segment. The Mitochondrial matrix segment spans residues 14–26 (LMEKLSSNTVDAQ). Residues 27-54 (EVELIWTILPAIVLILLALPSLQILYMM) traverse the membrane as a helical segment. The Mitochondrial intermembrane portion of the chain corresponds to 55-199 (DEIDEPDLTL…SSLLSASSSL (145 aa)). Cu cation is bound by residues His128, Cys163, Glu165, Cys167, His171, and Met174. Position 165 (Glu165) interacts with Mg(2+).

The protein belongs to the cytochrome c oxidase subunit 2 family. Component of the cytochrome c oxidase (complex IV, CIV), a multisubunit enzyme composed of 14 subunits. The complex is composed of a catalytic core of 3 subunits MT-CO1, MT-CO2 and MT-CO3, encoded in the mitochondrial DNA, and 11 supernumerary subunits COX4I, COX5A, COX5B, COX6A, COX6B, COX6C, COX7A, COX7B, COX7C, COX8 and NDUFA4, which are encoded in the nuclear genome. The complex exists as a monomer or a dimer and forms supercomplexes (SCs) in the inner mitochondrial membrane with NADH-ubiquinone oxidoreductase (complex I, CI) and ubiquinol-cytochrome c oxidoreductase (cytochrome b-c1 complex, complex III, CIII), resulting in different assemblies (supercomplex SCI(1)III(2)IV(1) and megacomplex MCI(2)III(2)IV(2)). Found in a complex with TMEM177, COA6, COX18, COX20, SCO1 and SCO2. Interacts with TMEM177 in a COX20-dependent manner. Interacts with COX20. Interacts with COX16. It depends on Cu cation as a cofactor.

It localises to the mitochondrion inner membrane. The catalysed reaction is 4 Fe(II)-[cytochrome c] + O2 + 8 H(+)(in) = 4 Fe(III)-[cytochrome c] + 2 H2O + 4 H(+)(out). Functionally, component of the cytochrome c oxidase, the last enzyme in the mitochondrial electron transport chain which drives oxidative phosphorylation. The respiratory chain contains 3 multisubunit complexes succinate dehydrogenase (complex II, CII), ubiquinol-cytochrome c oxidoreductase (cytochrome b-c1 complex, complex III, CIII) and cytochrome c oxidase (complex IV, CIV), that cooperate to transfer electrons derived from NADH and succinate to molecular oxygen, creating an electrochemical gradient over the inner membrane that drives transmembrane transport and the ATP synthase. Cytochrome c oxidase is the component of the respiratory chain that catalyzes the reduction of oxygen to water. Electrons originating from reduced cytochrome c in the intermembrane space (IMS) are transferred via the dinuclear copper A center (CU(A)) of subunit 2 and heme A of subunit 1 to the active site in subunit 1, a binuclear center (BNC) formed by heme A3 and copper B (CU(B)). The BNC reduces molecular oxygen to 2 water molecules using 4 electrons from cytochrome c in the IMS and 4 protons from the mitochondrial matrix. This is Cytochrome c oxidase subunit 2 (MT-CO2) from Dromaius novaehollandiae (Emu).